Reading from the N-terminus, the 254-residue chain is HLA class II histocompatibility antigen, DQ alpha 1 chain (254 aa).

The signal sequence occupies residues 1 to 23 (MILNKALMLGALALTTVMSPCGG). The tract at residues 24 to 119 (EDIVADHVAS…EVPEVTVFSK (96 aa)) is alpha-1. The Extracellular portion of the chain corresponds to 24–216 (EDIVADHVAS…IPAPMSELTE (193 aa)). 2 N-linked (GlcNAc...) asparagine glycosylation sites follow: Asn103 and Asn143. The 93-residue stretch at 112-204 (PEVTVFSKSP…LDKPLLKHWE (93 aa)) folds into the Ig-like C1-type domain. The alpha-2 stretch occupies residues 120–203 (SPVTLGQPNI…GLDKPLLKHW (84 aa)). Cys132 and Cys188 are joined by a disulfide. The interval 204–216 (EPEIPAPMSELTE) is connecting peptide. The chain crosses the membrane as a helical span at residues 217–239 (TVVCALGLSVGLVGIVVGTVFII). Topologically, residues 240–254 (RGLRSVGASRHQGPL) are cytoplasmic.

Belongs to the MHC class II family. As to quaternary structure, heterodimer of an alpha and a beta subunit; also referred as MHC class II molecule. In the endoplasmic reticulum (ER) it forms a heterononamer; 3 MHC class II molecules bind to a CD74 homotrimer (also known as invariant chain or HLA class II histocompatibility antigen gamma chain). In the endosomal/lysosomal system; CD74 undergoes sequential degradation by various proteases; leaving a small fragment termed CLIP on each MHC class II molecule. MHC class II molecule interacts with HLA_DM, and HLA_DO in B-cells, in order to release CLIP and facilitate the binding of antigenic peptides.

The protein localises to the cell membrane. The protein resides in the endoplasmic reticulum membrane. It is found in the golgi apparatus. Its subcellular location is the trans-Golgi network membrane. It localises to the endosome membrane. The protein localises to the lysosome membrane. Binds peptides derived from antigens that access the endocytic route of antigen presenting cells (APC) and presents them on the cell surface for recognition by the CD4 T-cells. The peptide binding cleft accommodates peptides of 10-30 residues. The peptides presented by MHC class II molecules are generated mostly by degradation of proteins that access the endocytic route, where they are processed by lysosomal proteases and other hydrolases. Exogenous antigens that have been endocytosed by the APC are thus readily available for presentation via MHC II molecules, and for this reason this antigen presentation pathway is usually referred to as exogenous. As membrane proteins on their way to degradation in lysosomes as part of their normal turn-over are also contained in the endosomal/lysosomal compartments, exogenous antigens must compete with those derived from endogenous components. Autophagy is also a source of endogenous peptides, autophagosomes constitutively fuse with MHC class II loading compartments. In addition to APCs, other cells of the gastrointestinal tract, such as epithelial cells, express MHC class II molecules and CD74 and act as APCs, which is an unusual trait of the GI tract. To produce a MHC class II molecule that presents an antigen, three MHC class II molecules (heterodimers of an alpha and a beta chain) associate with a CD74 trimer in the ER to form a heterononamer. Soon after the entry of this complex into the endosomal/lysosomal system where antigen processing occurs, CD74 undergoes a sequential degradation by various proteases, including CTSS and CTSL, leaving a small fragment termed CLIP (class-II-associated invariant chain peptide). The removal of CLIP is facilitated by HLA-DM via direct binding to the alpha-beta-CLIP complex so that CLIP is released. HLA-DM stabilizes MHC class II molecules until primary high affinity antigenic peptides are bound. The MHC II molecule bound to a peptide is then transported to the cell membrane surface. In B-cells, the interaction between HLA-DM and MHC class II molecules is regulated by HLA-DO. Primary dendritic cells (DCs) also to express HLA-DO. Lysosomal microenvironment has been implicated in the regulation of antigen loading into MHC II molecules, increased acidification produces increased proteolysis and efficient peptide loading. The sequence is that of HLA class II histocompatibility antigen, DQ alpha 1 chain (HLA-DQA1) from Homo sapiens (Human).